A 265-amino-acid polypeptide reads, in one-letter code: 3-methyl-2-oxobutanoate hydroxymethyltransferase (265 aa).

Positions 45 and 84 each coordinate Mg(2+). Residues 45 to 46 (DS), Asp-84, and Lys-112 each bind 3-methyl-2-oxobutanoate. A Mg(2+)-binding site is contributed by Glu-114. Catalysis depends on Glu-181, which acts as the Proton acceptor.

Belongs to the PanB family. As to quaternary structure, homodecamer; pentamer of dimers. Requires Mg(2+) as cofactor.

It is found in the cytoplasm. It catalyses the reaction 3-methyl-2-oxobutanoate + (6R)-5,10-methylene-5,6,7,8-tetrahydrofolate + H2O = 2-dehydropantoate + (6S)-5,6,7,8-tetrahydrofolate. It functions in the pathway cofactor biosynthesis; (R)-pantothenate biosynthesis; (R)-pantoate from 3-methyl-2-oxobutanoate: step 1/2. In terms of biological role, catalyzes the reversible reaction in which hydroxymethyl group from 5,10-methylenetetrahydrofolate is transferred onto alpha-ketoisovalerate to form ketopantoate. This chain is 3-methyl-2-oxobutanoate hydroxymethyltransferase, found in Yersinia pseudotuberculosis serotype IB (strain PB1/+).